The following is a 68-amino-acid chain: DNA-directed RNA polymerase subunit omega (68 aa).

This sequence belongs to the RNA polymerase subunit omega family. The RNAP catalytic core consists of 2 alpha, 1 beta, 1 beta' and 1 omega subunit. When a sigma factor is associated with the core the holoenzyme is formed, which can initiate transcription.

It carries out the reaction RNA(n) + a ribonucleoside 5'-triphosphate = RNA(n+1) + diphosphate. Promotes RNA polymerase assembly. Latches the N- and C-terminal regions of the beta' subunit thereby facilitating its interaction with the beta and alpha subunits. The protein is DNA-directed RNA polymerase subunit omega of Sulfurovum sp. (strain NBC37-1).